The following is a 322-amino-acid chain: Eukaryotic translation initiation factor 3 subunit I (322 aa).

WD repeat units follow at residues 4 to 43 (GHERSITQIKYNREGDLLFSSSKDQKPNVWYSLNGERLGT), 46 to 85 (GHQGAVWCLDVDWESRKLITAGGDMTAKLWDVEYGTVIAS), 141 to 180 (MTESKITSMLWGPLDETIITGHDNGNIAIWDVRKGQKVVD), 184 to 223 (DHTGVINDMQLSKDGTMFVTASKDATAKLFDSETLMCLKT), and 281 to 322 (GHFG…NIFE).

The protein belongs to the eIF-3 subunit I family. In terms of assembly, component of the eukaryotic translation initiation factor 3 (eIF-3) complex. The eIF-3 complex interacts with pix.

It localises to the cytoplasm. Component of the eukaryotic translation initiation factor 3 (eIF-3) complex, which is involved in protein synthesis of a specialized repertoire of mRNAs and, together with other initiation factors, stimulates binding of mRNA and methionyl-tRNAi to the 40S ribosome. The eIF-3 complex specifically targets and initiates translation of a subset of mRNAs involved in cell proliferation. The sequence is that of Eukaryotic translation initiation factor 3 subunit I from Drosophila willistoni (Fruit fly).